A 387-amino-acid chain; its full sequence is ADP,ATP carrier protein 2, mitochondrial (387 aa).

A mitochondrion-targeting transit peptide spans 1–77; sequence MADQANQPTV…PVMPTPLFAN (77 aa). 3 Solcar repeats span residues 85–178, 190–282, and 290–376; these read KNFM…FKRL, KWFA…IKPV, and DNFF…LQIL. The next 5 helical transmembrane spans lie at 87 to 114, 155 to 179, 188 to 208, 258 to 279, and 293 to 313; these read FMID…VKLL, TANV…KRLF, YWKW…SSLF, FNIS…YDSI, and FASF…SYPI. 2 residues coordinate ADP: Arg-160 and Lys-172. Arg-317 contributes to the ADP binding site. An important for transport activity region spans residues 317–322; it reads RRRMMM. The short motif at 317–322 is the Nucleotide carrier signature motif element; the sequence is RRRMMM. Residues 353-373 traverse the membrane as a helical segment; that stretch reads AGANILRAIAGAGVLSGYDQL.

It belongs to the mitochondrial carrier (TC 2.A.29) family. In terms of assembly, monomer.

Its subcellular location is the mitochondrion inner membrane. It carries out the reaction ADP(in) + ATP(out) = ADP(out) + ATP(in). The matrix-open state (m-state) is inhibited by the membrane-permeable bongkrekic acid (BKA). The cytoplasmic-open state (c-state) is inhibited by the membrane-impermeable toxic inhibitor carboxyatractyloside (CATR). Its function is as follows. ADP:ATP antiporter that mediates import of ADP into the mitochondrial matrix for ATP synthesis, and export of ATP out to fuel the cell. Cycles between the cytoplasmic-open state (c-state) and the matrix-open state (m-state): operates by the alternating access mechanism with a single substrate-binding site intermittently exposed to either the cytosolic (c-state) or matrix (m-state) side of the inner mitochondrial membrane. The sequence is that of ADP,ATP carrier protein 2, mitochondrial (ANT2) from Zea mays (Maize).